Reading from the N-terminus, the 293-residue chain is Cytidine deaminase (293 aa).

2 CMP/dCMP-type deaminase domains span residues 47 to 166 (DDRA…FGPA) and 186 to 293 (VSDD…YQAV). Residue 88–90 (NME) participates in substrate binding. His101 contributes to the Zn(2+) binding site. Glu103 acts as the Proton donor in catalysis. Zn(2+)-binding residues include Cys128 and Cys131.

It belongs to the cytidine and deoxycytidylate deaminase family. In terms of assembly, homodimer. Requires Zn(2+) as cofactor.

The catalysed reaction is cytidine + H2O + H(+) = uridine + NH4(+). It carries out the reaction 2'-deoxycytidine + H2O + H(+) = 2'-deoxyuridine + NH4(+). Its function is as follows. This enzyme scavenges exogenous and endogenous cytidine and 2'-deoxycytidine for UMP synthesis. This chain is Cytidine deaminase, found in Aeromonas hydrophila subsp. hydrophila (strain ATCC 7966 / DSM 30187 / BCRC 13018 / CCUG 14551 / JCM 1027 / KCTC 2358 / NCIMB 9240 / NCTC 8049).